Consider the following 334-residue polypeptide: S-adenosylmethionine decarboxylase proenzyme 2 (334 aa).

F7 serves as a coordination point for substrate. Catalysis depends on residues E8 and E11. E67 is a substrate binding site. S68 serves as the catalytic Schiff-base intermediate with substrate; via pyruvic acid. S68 is subject to Pyruvic acid (Ser); by autocatalysis. The active-site Proton donor; for catalytic activity is C82. Residue F223 coordinates substrate. Residues S229 and H243 each act as proton acceptor; for processing activity in the active site. E247 serves as a coordination point for substrate. A Phosphoserine modification is found at S298.

The protein belongs to the eukaryotic AdoMetDC family. Heterotetramer of two alpha and two beta chains. Pyruvate serves as cofactor. In terms of processing, is synthesized initially as an inactive proenzyme. Formation of the active enzyme involves a self-maturation process in which the active site pyruvoyl group is generated from an internal serine residue via an autocatalytic post-translational modification. Two non-identical subunits are generated from the proenzyme in this reaction, and the pyruvate is formed at the N-terminus of the alpha chain, which is derived from the carboxyl end of the proenzyme. The post-translation cleavage follows an unusual pathway, termed non-hydrolytic serinolysis, in which the side chain hydroxyl group of the serine supplies its oxygen atom to form the C-terminus of the beta chain, while the remainder of the serine residue undergoes an oxidative deamination to produce ammonia and the pyruvoyl group blocking the N-terminus of the alpha chain.

It catalyses the reaction S-adenosyl-L-methionine + H(+) = S-adenosyl 3-(methylsulfanyl)propylamine + CO2. It participates in amine and polyamine biosynthesis; S-adenosylmethioninamine biosynthesis; S-adenosylmethioninamine from S-adenosyl-L-methionine: step 1/1. In terms of biological role, essential for biosynthesis of the polyamines spermidine and spermine. Promotes maintenance and self-renewal of embryonic stem cells, by maintaining spermine levels. The protein is S-adenosylmethionine decarboxylase proenzyme 2 (Amd2) of Mus spretus (Western Mediterranean mouse).